The following is a 140-amino-acid chain: Putative nickel-responsive regulator (140 aa).

Residues His-81, His-92, His-94, and Cys-100 each contribute to the Ni(2+) site.

The protein belongs to the transcriptional regulatory CopG/NikR family. Ni(2+) is required as a cofactor.

In terms of biological role, transcriptional regulator. The chain is Putative nickel-responsive regulator from Methanococcoides burtonii (strain DSM 6242 / NBRC 107633 / OCM 468 / ACE-M).